The following is an 859-amino-acid chain: Envelope glycoprotein (859 aa).

Residues 1 to 6 (MVSIAF) constitute a propeptide that is removed on maturation. Over 7–614 (YGGIPGGIST…KDLWSHIGNW (608 aa)) the chain is Extracellular. N-linked (GlcNAc...) asparagine; by host glycans are attached at residues Asn40, Asn112, Asn141, Asn148, Asn186, Asn214, Asn233, Asn244, Asn340, Asn368, Asn399, Asn406, and Asn411. Residues 446–466 (FGISAIVAAIVAATAIAASAT) form a fusion peptide region. N-linked (GlcNAc...) asparagine; by host glycans are attached at residues Asn483 and Asn490. Positions 498-513 (LIERQIKILYAMILQT) are immunosuppression. N-linked (GlcNAc...) asparagine; by host glycosylation is found at Asn550 and Asn557. Coiled coils occupy residues 576-624 (ILTT…SIIK) and 663-699 (KKFH…YYKQ). The helical transmembrane segment at 615–635 (IPGLGASIIKYIVMFLLIYLL) threads the bilayer. Over 636–859 (LTSSPKILRA…TSHVSMPQYV (224 aa)) the chain is Cytoplasmic.

In terms of assembly, the mature envelope protein (Env) consists of a trimer of SU-TM heterodimers attached by noncovalent interactions or by a labile interchain disulfide bond. Specific enzymatic cleavages in vivo yield mature proteins. Envelope glycoproteins are synthesized as an inactive precursor that is N-glycosylated and processed likely by host cell furin or by a furin-like protease in the Golgi to yield the mature SU and TM proteins. The cleavage site between SU and TM requires the minimal sequence [KR]-X-[KR]-R.

The protein localises to the virion membrane. The protein resides in the host cell membrane. In terms of biological role, the surface protein (SU) attaches the virus to the host cell by binding to its receptor. This interaction triggers the refolding of the transmembrane protein (TM) and is thought to activate its fusogenic potential by unmasking its fusion peptide. Fusion occurs at the host cell plasma membrane. Its function is as follows. The transmembrane protein (TM) acts as a class I viral fusion protein. Under the current model, the protein has at least 3 conformational states: pre-fusion native state, pre-hairpin intermediate state, and post-fusion hairpin state. During viral and target cell membrane fusion, the coiled coil regions (heptad repeats) assume a trimer-of-hairpins structure, positioning the fusion peptide in close proximity to the C-terminal region of the ectodomain. The formation of this structure appears to drive apposition and subsequent fusion of viral and target cell membranes. Membranes fusion leads to delivery of the nucleocapsid into the cytoplasm. The protein is Envelope glycoprotein (env) of Equus asinus (Donkey).